The chain runs to 393 residues: 1-deoxy-D-xylulose 5-phosphate reductoisomerase (393 aa).

Positions 10, 11, 12, 13, 37, 38, and 124 each coordinate NADPH. Lys-125 lines the 1-deoxy-D-xylulose 5-phosphate pocket. Glu-126 contacts NADPH. Residue Asp-150 coordinates Mn(2+). 1-deoxy-D-xylulose 5-phosphate is bound by residues Ser-151, Glu-152, Ser-179, and His-202. Glu-152 lines the Mn(2+) pocket. Gly-208 is an NADPH binding site. The 1-deoxy-D-xylulose 5-phosphate site is built by Ser-215, Asn-220, Lys-221, and Glu-224. Mn(2+) is bound at residue Glu-224.

The protein belongs to the DXR family. Mg(2+) serves as cofactor. Requires Mn(2+) as cofactor.

It catalyses the reaction 2-C-methyl-D-erythritol 4-phosphate + NADP(+) = 1-deoxy-D-xylulose 5-phosphate + NADPH + H(+). Its pathway is isoprenoid biosynthesis; isopentenyl diphosphate biosynthesis via DXP pathway; isopentenyl diphosphate from 1-deoxy-D-xylulose 5-phosphate: step 1/6. Its function is as follows. Catalyzes the NADPH-dependent rearrangement and reduction of 1-deoxy-D-xylulose-5-phosphate (DXP) to 2-C-methyl-D-erythritol 4-phosphate (MEP). The sequence is that of 1-deoxy-D-xylulose 5-phosphate reductoisomerase from Cupriavidus necator (strain ATCC 17699 / DSM 428 / KCTC 22496 / NCIMB 10442 / H16 / Stanier 337) (Ralstonia eutropha).